We begin with the raw amino-acid sequence, 519 residues long: Probable cytochrome P450 513D1 (519 aa).

The chain crosses the membrane as a helical span at residues 1–21 (MGISSIIIILFIIVLLKKLIK). Cys464 lines the heme pocket.

It belongs to the cytochrome P450 family. Requires heme as cofactor.

It is found in the membrane. The protein is Probable cytochrome P450 513D1 (cyp513D1) of Dictyostelium discoideum (Social amoeba).